A 420-amino-acid polypeptide reads, in one-letter code: Phosphoribosylamine--glycine ligase (420 aa).

An ATP-grasp domain is found at lysine 108–histidine 314. Residue leucine 134–serine 195 participates in ATP binding. The Mg(2+) site is built by glutamate 284 and asparagine 286.

It belongs to the GARS family. Mg(2+) serves as cofactor. It depends on Mn(2+) as a cofactor.

It catalyses the reaction 5-phospho-beta-D-ribosylamine + glycine + ATP = N(1)-(5-phospho-beta-D-ribosyl)glycinamide + ADP + phosphate + H(+). The protein operates within purine metabolism; IMP biosynthesis via de novo pathway; N(1)-(5-phospho-D-ribosyl)glycinamide from 5-phospho-alpha-D-ribose 1-diphosphate: step 2/2. This chain is Phosphoribosylamine--glycine ligase, found in Listeria monocytogenes serotype 4b (strain F2365).